The primary structure comprises 205 residues: Rho-related GTP-binding protein RhoQ (205 aa).

Residue 16 to 23 coordinates GTP; sequence GDGAVGKT. An Effector region motif is present at residues 38–46; it reads YVPTVFDHY. Residues 63 to 67 and 121 to 124 contribute to the GTP site; these read DTAGQ and TQID. C202 bears the Cysteine methyl ester mark. The S-farnesyl cysteine moiety is linked to residue C202. Positions 203-205 are cleaved as a propeptide — removed in mature form; that stretch reads LIT.

The protein belongs to the small GTPase superfamily. Rho family. Interacts with EXO70, CDC42EP1, CDC42EP2 and CDC42EP3 in a GTP-dependent manner. Interacts with CDC42EP4, PARD6A, PARD6G (and probably PARD6B) in a GTP-dependent manner. Part of a quaternary complex containing PARD3, some PARD6 protein (PARD6A, PARD6B or PARD6G) and some atypical PKC protein (PRKCI or PRKCZ). Interacts with GOPC. Interacts with ARHGAP33/TCGAP. Post-translationally, may be post-translationally modified by both palmitoylation and polyisoprenylation.

The protein resides in the cytoplasm. It localises to the cell membrane. Its activity is regulated as follows. Regulated by guanine nucleotide exchange factors (GEFs) which promote the exchange of bound GDP for free GTP, GTPase activating proteins (GAPs) which increase the GTP hydrolysis activity, and GDP dissociation inhibitors which inhibit the dissociation of the nucleotide from the GTPase. Plasma membrane-associated small GTPase which cycles between an active GTP-bound and an inactive GDP-bound state. In active state binds to a variety of effector proteins to regulate cellular responses. Involved in epithelial cell polarization processes. May play a role in CFTR trafficking to the plasma membrane. Causes the formation of thin, actin-rich surface projections called filopodia. The sequence is that of Rho-related GTP-binding protein RhoQ (Rhoq) from Mus musculus (Mouse).